The primary structure comprises 137 residues: 1,4-dihydroxy-2-naphthoyl-CoA hydrolase (137 aa).

The active site involves Asp12.

It belongs to the 4-hydroxybenzoyl-CoA thioesterase family. DHNA-CoA hydrolase subfamily.

It catalyses the reaction 1,4-dihydroxy-2-naphthoyl-CoA + H2O = 1,4-dihydroxy-2-naphthoate + CoA + H(+). It participates in cofactor biosynthesis; phylloquinone biosynthesis. It functions in the pathway quinol/quinone metabolism; 1,4-dihydroxy-2-naphthoate biosynthesis; 1,4-dihydroxy-2-naphthoate from chorismate: step 7/7. Its function is as follows. Catalyzes the hydrolysis of 1,4-dihydroxy-2-naphthoyl-CoA (DHNA-CoA) to 1,4-dihydroxy-2-naphthoate (DHNA), a reaction involved in phylloquinone (vitamin K1) biosynthesis. In Acaryochloris marina (strain MBIC 11017), this protein is 1,4-dihydroxy-2-naphthoyl-CoA hydrolase.